The chain runs to 373 residues: Erythronate-4-phosphate dehydrogenase (373 aa).

Residues Ser45 and Thr67 each coordinate substrate. Residues Asp147, 206–208 (ASR), and Asp232 contribute to the NAD(+) site. The active site involves Arg208. Glu237 is an active-site residue. The active-site Proton donor is His254. An NAD(+)-binding site is contributed by Gly257. A substrate-binding site is contributed by Tyr258.

It belongs to the D-isomer specific 2-hydroxyacid dehydrogenase family. PdxB subfamily. As to quaternary structure, homodimer.

It is found in the cytoplasm. The catalysed reaction is 4-phospho-D-erythronate + NAD(+) = (R)-3-hydroxy-2-oxo-4-phosphooxybutanoate + NADH + H(+). The protein operates within cofactor biosynthesis; pyridoxine 5'-phosphate biosynthesis; pyridoxine 5'-phosphate from D-erythrose 4-phosphate: step 2/5. In terms of biological role, catalyzes the oxidation of erythronate-4-phosphate to 3-hydroxy-2-oxo-4-phosphonooxybutanoate. The chain is Erythronate-4-phosphate dehydrogenase from Tolumonas auensis (strain DSM 9187 / NBRC 110442 / TA 4).